We begin with the raw amino-acid sequence, 315 residues long: Probable integrase/recombinase aq_aa09 (315 aa).

The Core-binding (CB) domain maps to 1-78 (MEHFIDTYLY…EVRLFYEWLQ (78 aa)). In terms of domain architecture, Tyr recombinase spans 106 to 313 (SKKKYYSDDE…REKQLEAILE (208 aa)). Catalysis depends on residues arginine 150, lysine 186, histidine 263, arginine 266, and histidine 289. Catalysis depends on tyrosine 299, which acts as the O-(3'-phospho-DNA)-tyrosine intermediate.

This sequence belongs to the 'phage' integrase family.

In terms of biological role, may function as an integrase. This Aquifex aeolicus (strain VF5) protein is Probable integrase/recombinase aq_aa09.